The primary structure comprises 317 residues: Acetyl-coenzyme A carboxylase carboxyl transferase subunit alpha (317 aa).

The CoA carboxyltransferase C-terminal domain maps to 39-293 (RLQKKSNDLT…KAVLEKQLHE (255 aa)).

This sequence belongs to the AccA family. As to quaternary structure, acetyl-CoA carboxylase is a heterohexamer composed of biotin carboxyl carrier protein (AccB), biotin carboxylase (AccC) and two subunits each of ACCase subunit alpha (AccA) and ACCase subunit beta (AccD).

The protein localises to the cytoplasm. It catalyses the reaction N(6)-carboxybiotinyl-L-lysyl-[protein] + acetyl-CoA = N(6)-biotinyl-L-lysyl-[protein] + malonyl-CoA. The protein operates within lipid metabolism; malonyl-CoA biosynthesis; malonyl-CoA from acetyl-CoA: step 1/1. Functionally, component of the acetyl coenzyme A carboxylase (ACC) complex. First, biotin carboxylase catalyzes the carboxylation of biotin on its carrier protein (BCCP) and then the CO(2) group is transferred by the carboxyltransferase to acetyl-CoA to form malonyl-CoA. The sequence is that of Acetyl-coenzyme A carboxylase carboxyl transferase subunit alpha from Neisseria gonorrhoeae (strain NCCP11945).